The primary structure comprises 124 residues: UPF0102 protein Mmc1_3298 (124 aa).

This sequence belongs to the UPF0102 family.

This chain is UPF0102 protein Mmc1_3298, found in Magnetococcus marinus (strain ATCC BAA-1437 / JCM 17883 / MC-1).